Here is a 192-residue protein sequence, read N- to C-terminus: UPF0301 protein BceJ2315_30870 (192 aa).

The protein belongs to the UPF0301 (AlgH) family.

In Burkholderia cenocepacia (strain ATCC BAA-245 / DSM 16553 / LMG 16656 / NCTC 13227 / J2315 / CF5610) (Burkholderia cepacia (strain J2315)), this protein is UPF0301 protein BceJ2315_30870.